We begin with the raw amino-acid sequence, 321 residues long: Gap junction delta-2 protein (321 aa).

Topologically, residues 1–19 (MGEWTILERLLEAAVQQHS) are cytoplasmic. The chain crosses the membrane as a helical span at residues 20-42 (TMIGRILLTVVVIFRILIVAIVG). At 43 to 75 (ETVYDDEQTMFVCNTLQPGCNQACYDRAFPISH) the chain is on the extracellular side. Residues 76–98 (IRYWVFQIIMVCTPSLCFITYSV) form a helical membrane-spanning segment. Residues 99–197 (HQSAKQRERR…KLRRQEGISR (99 aa)) lie on the Cytoplasmic side of the membrane. A disordered region spans residues 118-141 (RDPPESIGGPGGTGGGGSGGGKRE). A compositionally biased stretch (gly residues) spans 125-137 (GGPGGTGGGGSGG). The chain crosses the membrane as a helical span at residues 198 to 220 (FYIIQVVFRNALEIGFLVGQYFL). Topologically, residues 221-252 (YGFSVPGLYECNRYPCIKEVECYVSRPTEKTV) are extracellular. The helical transmembrane segment at 253-275 (FLVFMFAVSGICVVLNLAELNHL) threads the bilayer. Residues 276–321 (GWRKIKLAVRGAQAKRKSIYEIRNKDLPRVSVPNFGRTQSSDSAYV) lie on the Cytoplasmic side of the membrane.

This sequence belongs to the connexin family. Delta-type subfamily. In terms of assembly, a connexon is composed of a hexamer of connexins. As to expression, highly expressed in neurons.

It localises to the cell membrane. Its subcellular location is the cell junction. It is found in the gap junction. Functionally, one gap junction consists of a cluster of closely packed pairs of transmembrane channels, the connexons, through which materials of low MW diffuse from one cell to a neighboring cell. This Homo sapiens (Human) protein is Gap junction delta-2 protein (GJD2).